The following is a 504-amino-acid chain: ATP-dependent RNA helicase DBP3 (504 aa).

Residues 1 to 14 (MSKDELKDKKRKVE) are compositionally biased toward basic and acidic residues. Residues 1–65 (MSKDELKDKK…KSETESFAAS (65 aa)) form a disordered region. Residues 20–53 (SKKKLKKDKKDKKDKKDKKDKKDKKEKKEKKEKK) show a composition bias toward basic residues. Positions 94 to 120 (LDFSQVSFIDQIQKEISKFPKPTPIQA) match the Q motif motif. The region spanning 123–296 (WPYLLAGKDV…SSFMSEPVKV (174 aa)) is the Helicase ATP-binding domain. Residue 136–143 (AETGSGKT) coordinates ATP. Positions 243–246 (DEAD) match the DEAD box motif. The Helicase C-terminal domain maps to 325–474 (KLLELLKKYH…PVPEELKKFG (150 aa)).

It belongs to the DEAD box helicase family. DDX5/DBP2 subfamily.

It is found in the nucleus. It localises to the nucleolus. It catalyses the reaction ATP + H2O = ADP + phosphate + H(+). In terms of biological role, ATP-dependent RNA helicase required for 60S ribosomal subunit synthesis. Involved in efficient pre-rRNA processing, predominantly at site A3, which is necessary for the normal formation of 25S and 5.8S rRNAs. This is ATP-dependent RNA helicase DBP3 (DBP3) from Kluyveromyces lactis (strain ATCC 8585 / CBS 2359 / DSM 70799 / NBRC 1267 / NRRL Y-1140 / WM37) (Yeast).